The chain runs to 77 residues: Defensin-like protein 91 (77 aa).

Positions 1 to 27 (METKKISYFLLPSLMIVALIFQPMCSA) are cleaved as a signal peptide. 4 disulfides stabilise this stretch: C38/C75, C43/C64, C49/C73, and C53/C74.

This sequence belongs to the DEFL family.

It is found in the secreted. The protein is Defensin-like protein 91 (LCR47) of Arabidopsis thaliana (Mouse-ear cress).